The primary structure comprises 1094 residues: Potassium-transporting ATPase alpha chain 2 (1094 aa).

Residues 1–21 (MAGGAHRADRATGEERKEGGG) show a composition bias toward basic and acidic residues. The segment at 1-37 (MAGGAHRADRATGEERKEGGGRWRAPHSPSPPGPRGC) is disordered. Pro residues predominate over residues 28–37 (SPSPPGPRGC). The Cytoplasmic portion of the chain corresponds to 56-157 (RYCTLLLFQR…NALTPPKQTP (102 aa)). A helical membrane pass occupies residues 158–178 (EIIKFLKQMVGGFSILLWVGA). Topologically, residues 179-201 (VLCWIAFGIQYVSNPSASLDRVY) are lumenal. A helical membrane pass occupies residues 202–222 (LGTVLAVVVILTGIFAYYQEA). At 223–358 (KSTNIMASFC…NEKTPIAIEI (136 aa)) the chain is on the cytoplasmic side. Positions 286–305 (SSLTGESEPQSRSSGFTHEN) are disordered. Residues 359–378 (EHFVHIVAGVAVSVGILFFI) form a helical membrane-spanning segment. The Lumenal portion of the chain corresponds to 379-390 (IAVCMKYHVLDA). The chain crosses the membrane as a helical span at residues 391–408 (IIFLIAIIVANVPEGLLA). Residues 409–842 (TVTVALSLTA…EEGRLIFDNL (434 aa)) are Cytoplasmic-facing. The active-site 4-aspartylphosphate intermediate is the Asp-446. Mg(2+) is bound by residues Asp-787 and Asp-791. Residues 843-862 (KKTIAYTLTKNIAELCPFLI) form a helical membrane-spanning segment. Residues 863-872 (YIILGLPLPI) are Lumenal-facing. The chain crosses the membrane as a helical span at residues 873-893 (GTITLLFIDLGTDIIPSIALA). Topologically, residues 894–913 (YEKAESDIMNRKPRHKKKDR) are cytoplasmic. Residues 914-936 (LVNQQLAVYSYLHIGLMQALGAF) form a helical membrane-spanning segment. The Lumenal segment spans residues 937-988 (LVYFTVYAQQGFRPTSLFHLRIAWDSDHLNDLEDNYGQEWTSYQRQYLEWTG). The chain crosses the membrane as a helical span at residues 989–1008 (YTAFFVGIMVQQIADLIIRK). Topologically, residues 1009 to 1022 (TRKNSIFKQGLFRN) are cytoplasmic. Ser-1013 is modified (phosphoserine; by PKA). Residues 1023 to 1041 (KVIWVGIASQIIVALLLSY) traverse the membrane as a helical segment. At 1042–1056 (GLGSITALNFTMLKA) the chain is on the lumenal side. The helical transmembrane segment at 1057-1077 (QYWFVAVPHAILIWVYDEMRK) threads the bilayer. The Cytoplasmic segment spans residues 1078 to 1094 (LFIRLYPGSWWDKNMYY).

Belongs to the cation transport ATPase (P-type) (TC 3.A.3) family. Type IIC subfamily. As to quaternary structure, the X(+)/K(+) ATPase pump is composed of a catalytic alpha subunit and an auxiliary non-catalytic beta subunit. The alpha subunit pairs with the beta subunit of gastric H(+)/K(+) ATPase ATP4B or the beta subunit of Na(+)/K(+) ATPases ATP1B1 and ATP1B3; this interaction is required for the formation of a functionally active pump and its targeting at the plasma membrane. Found in the skin, kidney, distal colon and brain. In the kidney it is found in the connecting tubule, cortical collecting duct and outer medullary collecting duct while in the brain it is specific to choroid plexus and cortex.

The protein localises to the apical cell membrane. The catalysed reaction is K(+)(out) + ATP + H2O + H(+)(in) = K(+)(in) + ADP + phosphate + 2 H(+)(out). It carries out the reaction K(+)(out) + Na(+)(in) + ATP + H2O = K(+)(in) + Na(+)(out) + ADP + phosphate + H(+). In terms of biological role, the catalytic subunit of a H(+)/K(+) ATPase and/or Na(+)/K(+) ATPase pump which transports K(+) ions in exchange for Na(+) and/or H(+) ions across the apical membrane of epithelial cells. Uses ATP as an energy source to pump K(+) ions into the cell while transporting Na(+) and/or H(+) ions to the extracellular compartment. Involved in the maintenance of electrolyte homeostasis through K(+) ion absorption in kidney and colon. In the airway epithelium, may play a primary role in mucus acidification regulating its viscosity and clearance. The protein is Potassium-transporting ATPase alpha chain 2 (ATP12A) of Oryctolagus cuniculus (Rabbit).